Here is an 88-residue protein sequence, read N- to C-terminus: YcgL domain-containing protein NTHI1684 (88 aa).

A YcgL domain is found at 1–85 (MLCAIYKSKK…QDDGLFNSLS (85 aa)).

This is YcgL domain-containing protein NTHI1684 from Haemophilus influenzae (strain 86-028NP).